Reading from the N-terminus, the 316-residue chain is HPr kinase/phosphorylase (316 aa).

Active-site residues include His146 and Lys167. ATP is bound at residue 161–168 (GESGLGKS). Ser168 contributes to the Mg(2+) binding site. Asp185 functions as the Proton acceptor; for phosphorylation activity. Proton donor; for dephosphorylation activity in the catalytic mechanism. Positions 209–218 (LEVRGIGLLD) are important for the catalytic mechanism of both phosphorylation and dephosphorylation. Mg(2+) is bound at residue Glu210. The active site involves Arg252. The interval 273-278 (QVEAGR) is important for the catalytic mechanism of dephosphorylation.

Belongs to the HPrK/P family. In terms of assembly, homohexamer. Mg(2+) is required as a cofactor.

The catalysed reaction is [HPr protein]-L-serine + ATP = [HPr protein]-O-phospho-L-serine + ADP + H(+). The enzyme catalyses [HPr protein]-O-phospho-L-serine + phosphate + H(+) = [HPr protein]-L-serine + diphosphate. Functionally, catalyzes the ATP- as well as the pyrophosphate-dependent phosphorylation of a specific serine residue in HPr, a phosphocarrier protein of the phosphoenolpyruvate-dependent sugar phosphotransferase system (PTS). HprK/P also catalyzes the pyrophosphate-producing, inorganic phosphate-dependent dephosphorylation (phosphorolysis) of seryl-phosphorylated HPr (P-Ser-HPr). The sequence is that of HPr kinase/phosphorylase from Polaromonas naphthalenivorans (strain CJ2).